The sequence spans 364 residues: MKKNLMLIFGGVSFEHEISLRSAYGIYSSLLKLDKYNVFSVFVDKVTGIWYLLDSVPSSAELIKRHTTSIVNFIPGCGIFVNNKSLEIDVIFPIIHGRTGEDGAIQGFVKMMDIPCVGAGILGSAISINKYFCKVLLKSFNIPVVSFIGFKKDDYILNKEGIKEDINNKLNYPVIVKPSVLGSSIGINVAYNVSQIEKYIEEAFEYDLTVVVEKFIKAREIECAVIGNDQIKIFTPGEIVVQDFIFYDYDAKYSTVPGDSIVFNIPAHLDMKHLLDIKEYAFLTYKYLELRGMARIDFLISKDTNLLYVNEVNTIPGFTDISMFAKMCEHDGLSYESLVDKLITLAFESYKKRKDKIDFTRLES.

Positions 134–344 (KVLLKSFNIP…YESLVDKLIT (211 aa)) constitute an ATP-grasp domain. 167–222 (NNKLNYPVIVKPSVLGSSIGINVAYNVSQIEKYIEEAFEYDLTVVVEKFIKAREIE) provides a ligand contact to ATP. Positions 297, 311, and 313 each coordinate Mg(2+).

The protein belongs to the D-alanine--D-alanine ligase family. The cofactor is Mg(2+). Mn(2+) serves as cofactor.

It localises to the cytoplasm. The enzyme catalyses 2 D-alanine + ATP = D-alanyl-D-alanine + ADP + phosphate + H(+). It participates in cell wall biogenesis; peptidoglycan biosynthesis. Cell wall formation. The polypeptide is D-alanine--D-alanine ligase (Borrelia duttonii (strain Ly)).